Reading from the N-terminus, the 587-residue chain is Proteasome-associated ATPase (587 aa).

Residues 1 to 94 (MAARDDAEAR…KEEVDRLAQP (94 aa)) are a coiled coil. 276–281 (GCGKTL) contacts ATP. The tract at residues 586–587 (YL) is docks into pockets in the proteasome alpha-ring.

The protein belongs to the AAA ATPase family. Homohexamer. Assembles into a hexameric ring structure that caps the 20S proteasome core. Strongly interacts with the prokaryotic ubiquitin-like protein Pup through a hydrophobic interface; the interacting region of ARC lies in its N-terminal coiled-coil domain. There is one Pup binding site per ARC hexamer ring. Upon ATP-binding, the C-terminus of ARC interacts with the alpha-rings of the proteasome core, possibly by binding to the intersubunit pockets.

It participates in protein degradation; proteasomal Pup-dependent pathway. ATPase which is responsible for recognizing, binding, unfolding and translocation of pupylated proteins into the bacterial 20S proteasome core particle. May be essential for opening the gate of the 20S proteasome via an interaction with its C-terminus, thereby allowing substrate entry and access to the site of proteolysis. Thus, the C-termini of the proteasomal ATPase may function like a 'key in a lock' to induce gate opening and therefore regulate proteolysis. In Streptosporangium roseum (strain ATCC 12428 / DSM 43021 / JCM 3005 / KCTC 9067 / NCIMB 10171 / NRRL 2505 / NI 9100), this protein is Proteasome-associated ATPase.